The primary structure comprises 435 residues: MSGLMFRFPFRRFVATMPDKTKYIAKSGTYPKGFLINGVSSGVKAKGALDLTMLVSEKPCNAAAVFTKNAFQAAPVRVSRETLQQTKGQGIQCLVVNSGCANAVTGSGGVQDARLITALADKAVLGRGDGGLPSTLVMSTGVIGQRLKMDKISSGVMKAIEGLGSSHEHWMRGAKAICTTDTFPKVVSQEFSVNGQTYRIAGLAKGAGMINPNLATLLGFFATDAPVAVEAVQQILREAVDKSFNAISIDGDTSTNDTIAFLANGASGGPEIDVSSPAYEELKQSVTGIAQKLSQLVVRDGEGATKFVTIRVRGAATEADAKLVAATISNSALVKTAFFGEDANWGRILCAIGYSGAIVNPKATSVSFVPADQTESLRLLVLGEPQNVDEERASEILSHDEFGLDVDLGSGNHETVSWTCDFSYEYVRINADYRS.

Substrate is bound by residues threonine 179, lysine 205, threonine 216, glutamate 302, asparagine 430, and serine 435. Threonine 216 acts as the Nucleophile in catalysis.

This sequence belongs to the ArgJ family. Heterodimer of an alpha and a beta chain. Post-translationally, the alpha and beta chains are autoproteolytically processed from a single precursor protein within the mitochondrion.

The protein resides in the mitochondrion matrix. The enzyme catalyses N(2)-acetyl-L-ornithine + L-glutamate = N-acetyl-L-glutamate + L-ornithine. It carries out the reaction L-glutamate + acetyl-CoA = N-acetyl-L-glutamate + CoA + H(+). It functions in the pathway amino-acid biosynthesis; L-arginine biosynthesis; L-ornithine and N-acetyl-L-glutamate from L-glutamate and N(2)-acetyl-L-ornithine (cyclic): step 1/1. It participates in amino-acid biosynthesis; L-arginine biosynthesis; N(2)-acetyl-L-ornithine from L-glutamate: step 1/4. Catalyzes two activities which are involved in the cyclic version of arginine biosynthesis: the synthesis of acetylglutamate from glutamate and acetyl-CoA, and of ornithine by transacetylation between acetylornithine and glutamate. The sequence is that of Arginine biosynthesis bifunctional protein ArgJ, mitochondrial from Schizosaccharomyces japonicus (strain yFS275 / FY16936) (Fission yeast).